Consider the following 523-residue polypeptide: GMP synthase [glutamine-hydrolyzing] (523 aa).

A Glutamine amidotransferase type-1 domain is found at 9-198; it reads PVLVVDFGAQ…LTEIAGLEQN (190 aa). Catalysis depends on C86, which acts as the Nucleophile. Catalysis depends on residues H172 and E174. The GMPS ATP-PPase domain occupies 199-397; it reads WTAANIAEEL…LGLPEEIVGR (199 aa). ATP is bound at residue 227–233; sequence SGGVDSA.

In terms of assembly, homodimer.

It catalyses the reaction XMP + L-glutamine + ATP + H2O = GMP + L-glutamate + AMP + diphosphate + 2 H(+). It participates in purine metabolism; GMP biosynthesis; GMP from XMP (L-Gln route): step 1/1. Its function is as follows. Catalyzes the synthesis of GMP from XMP. The polypeptide is GMP synthase [glutamine-hydrolyzing] (Corynebacterium glutamicum (strain ATCC 13032 / DSM 20300 / JCM 1318 / BCRC 11384 / CCUG 27702 / LMG 3730 / NBRC 12168 / NCIMB 10025 / NRRL B-2784 / 534)).